A 235-amino-acid polypeptide reads, in one-letter code: Ribonuclease 3 (235 aa).

In terms of domain architecture, RNase III spans 6 to 131 (IDQLEKLTGH…LIAVIYLDGG (126 aa)). Position 44 (glutamate 44) interacts with Mg(2+). The active site involves aspartate 48. Positions 117 and 120 each coordinate Mg(2+). The active site involves glutamate 120. A DRBM domain is found at 156–225 (DAKTQLQEWA…AEKILRREGI (70 aa)).

The protein belongs to the ribonuclease III family. Homodimer. It depends on Mg(2+) as a cofactor.

It localises to the cytoplasm. It catalyses the reaction Endonucleolytic cleavage to 5'-phosphomonoester.. In terms of biological role, digests double-stranded RNA. Involved in the processing of primary rRNA transcript to yield the immediate precursors to the large and small rRNAs (23S and 16S). Processes some mRNAs, and tRNAs when they are encoded in the rRNA operon. Processes pre-crRNA and tracrRNA of type II CRISPR loci if present in the organism. The polypeptide is Ribonuclease 3 (Bartonella henselae (strain ATCC 49882 / DSM 28221 / CCUG 30454 / Houston 1) (Rochalimaea henselae)).